Reading from the N-terminus, the 111-residue chain is Probable 4-amino-4-deoxy-L-arabinose-phosphoundecaprenol flippase subunit ArnE (111 aa).

Transmembrane regions (helical) follow at residues 38 to 58 (LWLG…LLVL), 61 to 81 (LPVG…TLAA), and 91 to 111 (PRHW…GSAA). The region spanning 40 to 109 (LGLALICMGA…IISGIIILGS (70 aa)) is the EamA domain.

It belongs to the ArnE family. In terms of assembly, heterodimer of ArnE and ArnF.

The protein resides in the cell inner membrane. It participates in bacterial outer membrane biogenesis; lipopolysaccharide biosynthesis. Its function is as follows. Translocates 4-amino-4-deoxy-L-arabinose-phosphoundecaprenol (alpha-L-Ara4N-phosphoundecaprenol) from the cytoplasmic to the periplasmic side of the inner membrane. The protein is Probable 4-amino-4-deoxy-L-arabinose-phosphoundecaprenol flippase subunit ArnE of Salmonella choleraesuis (strain SC-B67).